The chain runs to 96 residues: Large ribosomal subunit protein eL14 (96 aa).

Belongs to the eukaryotic ribosomal protein eL14 family.

The sequence is that of Large ribosomal subunit protein eL14 from Sulfurisphaera tokodaii (strain DSM 16993 / JCM 10545 / NBRC 100140 / 7) (Sulfolobus tokodaii).